A 448-amino-acid polypeptide reads, in one-letter code: Ribosomal protein uS12 methylthiotransferase RimO (448 aa).

The MTTase N-terminal domain occupies 7–123 (EKVSLVSLGC…IAEIIAEKEG (117 aa)). Positions 16, 52, 86, 161, 165, and 168 each coordinate [4Fe-4S] cluster. The Radical SAM core domain occupies 147-377 (SSPYYTAYLK…MRTQARVSFK (231 aa)). Positions 380 to 448 (RSLVDTEELV…DYDLIGEIVP (69 aa)) constitute a TRAM domain.

The protein belongs to the methylthiotransferase family. RimO subfamily. [4Fe-4S] cluster serves as cofactor.

It is found in the cytoplasm. It catalyses the reaction L-aspartate(89)-[ribosomal protein uS12]-hydrogen + (sulfur carrier)-SH + AH2 + 2 S-adenosyl-L-methionine = 3-methylsulfanyl-L-aspartate(89)-[ribosomal protein uS12]-hydrogen + (sulfur carrier)-H + 5'-deoxyadenosine + L-methionine + A + S-adenosyl-L-homocysteine + 2 H(+). Its function is as follows. Catalyzes the methylthiolation of an aspartic acid residue of ribosomal protein uS12. The polypeptide is Ribosomal protein uS12 methylthiotransferase RimO (Geotalea uraniireducens (strain Rf4) (Geobacter uraniireducens)).